The sequence spans 559 residues: T-complex protein 1 subunit gamma (559 aa).

C369 and C375 form a disulfide bridge. Residues 537-559 (GGASVTDGNGQEIPETFGDARDG) are disordered.

It belongs to the TCP-1 chaperonin family. As to quaternary structure, heterooligomeric complex of about 850 to 900 kDa that forms two stacked rings, 12 to 16 nm in diameter.

It localises to the cytoplasm. Its function is as follows. Molecular chaperone; assists the folding of proteins upon ATP hydrolysis. Known to play a role, in vitro, in the folding of actin and tubulin. The polypeptide is T-complex protein 1 subunit gamma (Tetrahymena pyriformis).